The sequence spans 386 residues: Hemagglutinin-esterase (386 aa).

A signal peptide spans 1–11 (MLIIFLFFYFC). Residues 1-121 (MLIIFLFFYF…SNDVWLLNKV (121 aa)) are esterase domain 1. Residues 12-359 (YGFNEPLNVV…PICVYDFLPI (348 aa)) lie on the Virion surface side of the membrane. Ser34 functions as the Nucleophile in the catalytic mechanism. Cys38 and Cys59 are oxidised to a cystine. Asn83, Asn110, Asn145, and Asn168 each carry an N-linked (GlcNAc...) asparagine; by host glycan. Cys107 and Cys154 are joined by a disulfide. Residues 122–236 (RFYRALYSNM…GSYKVSTTAP (115 aa)) are receptor binding. 3 disulfides stabilise this stretch: Cys180/Cys246, Cys188/Cys219, and Cys277/Cys282. The esterase domain 2 stretch occupies residues 237 to 349 (FLSLPTKALC…RCPTSSIIKH (113 aa)). N-linked (GlcNAc...) asparagine; by host glycosylation occurs at Asn286. Residues Asp296 and His299 each act as charge relay system in the active site. Cys317 and Cys341 are oxidised to a cystine. Asn328 is a glycosylation site (N-linked (GlcNAc...) asparagine; by host). A helical transmembrane segment spans residues 360–380 (ILQGILLCLALLFVVFLLFLL). Topologically, residues 381–386 (YNDKSH) are intravirion.

The protein belongs to the influenza type C/coronaviruses hemagglutinin-esterase family. Homodimer; disulfide-linked. Forms a complex with the M protein in the pre-Golgi. Associates then with S-M complex to form a ternary complex S-M-HE. N-glycosylated in the host RER.

The protein resides in the virion membrane. Its subcellular location is the host cell membrane. The enzyme catalyses N-acetyl-9-O-acetylneuraminate + H2O = N-acetylneuraminate + acetate + H(+). The catalysed reaction is N-acetyl-4-O-acetylneuraminate + H2O = N-acetylneuraminate + acetate + H(+). Functionally, structural protein that makes short spikes at the surface of the virus. Contains receptor binding and receptor-destroying activities. Mediates de-O-acetylation of N-acetyl-4-O-acetylneuraminic acid, which is probably the receptor determinant recognized by the virus on the surface of erythrocytes and susceptible cells. This receptor-destroying activity is important for virus release as it probably helps preventing self-aggregation and ensures the efficient spread of the progeny virus from cell to cell. May serve as a secondary viral attachment protein for initiating infection, the spike protein being the major one. May become a target for both the humoral and the cellular branches of the immune system. The protein is Hemagglutinin-esterase of Homo sapiens (Human).